Consider the following 228-residue polypeptide: 3,4-dihydroxy-2-butanone 4-phosphate synthase (228 aa).

Residues 37 to 38, D42, 150 to 154, and E174 contribute to the D-ribulose 5-phosphate site; these read RE and RPGHT. E38 is a Mg(2+) binding site. Residue H153 coordinates Mg(2+).

The protein belongs to the DHBP synthase family. In terms of assembly, homodimer. Mg(2+) serves as cofactor. Requires Mn(2+) as cofactor.

It carries out the reaction D-ribulose 5-phosphate = (2S)-2-hydroxy-3-oxobutyl phosphate + formate + H(+). Its pathway is cofactor biosynthesis; riboflavin biosynthesis; 2-hydroxy-3-oxobutyl phosphate from D-ribulose 5-phosphate: step 1/1. Functionally, catalyzes the conversion of D-ribulose 5-phosphate to formate and 3,4-dihydroxy-2-butanone 4-phosphate. This chain is 3,4-dihydroxy-2-butanone 4-phosphate synthase, found in Chloroherpeton thalassium (strain ATCC 35110 / GB-78).